The sequence spans 246 residues: Protein lin-37 homolog (246 aa).

M1 is subject to N-acetylmethionine. Glycyl lysine isopeptide (Lys-Gly) (interchain with G-Cter in SUMO2) cross-links involve residues K5 and K7. The span at 36–55 (DRERLDEEPGKTSLDTHNKD) shows a compositional bias: basic and acidic residues. Disordered stretches follow at residues 36–90 (DRER…GGPQ) and 127–209 (PTVR…LIYR). S135 and S138 each carry phosphoserine. The segment covering 163-172 (LPPPTAPGPP) has biased composition (pro residues). The residue at position 167 (T167) is a Phosphothreonine. 2 positions are modified to phosphoserine: S182 and S202.

Component of the DREAM complex (also named LINC complex) at least composed of E2F4, E2F5, LIN9, LIN37, LIN52, LIN54, MYBL1, MYBL2, RBL1, RBL2, RBBP4, TFDP1 and TFDP2. The complex exists in quiescent cells where it represses cell cycle-dependent genes. It dissociates in S phase when LIN9, LIN37, LIN52 and LIN54 form a subcomplex that binds to MYBL2.

The chain is Protein lin-37 homolog (LIN37) from Bos taurus (Bovine).